Here is a 156-residue protein sequence, read N- to C-terminus: Protein-export protein SecB (156 aa).

Belongs to the SecB family. In terms of assembly, homotetramer, a dimer of dimers. One homotetramer interacts with 1 SecA dimer.

Its subcellular location is the cytoplasm. Functionally, one of the proteins required for the normal export of preproteins out of the cell cytoplasm. It is a molecular chaperone that binds to a subset of precursor proteins, maintaining them in a translocation-competent state. It also specifically binds to its receptor SecA. The chain is Protein-export protein SecB from Desulfotalea psychrophila (strain LSv54 / DSM 12343).